The sequence spans 290 residues: Probable endonuclease 4 (290 aa).

9 residues coordinate Zn(2+): H69, H109, E145, D179, H182, H216, D229, H231, and E261.

Belongs to the AP endonuclease 2 family. Requires Zn(2+) as cofactor.

It catalyses the reaction Endonucleolytic cleavage to 5'-phosphooligonucleotide end-products.. Functionally, endonuclease IV plays a role in DNA repair. It cleaves phosphodiester bonds at apurinic or apyrimidinic (AP) sites, generating a 3'-hydroxyl group and a 5'-terminal sugar phosphate. The protein is Probable endonuclease 4 of Chlorobium limicola (strain DSM 245 / NBRC 103803 / 6330).